Consider the following 260-residue polypeptide: CD40 ligand (260 aa).

Residues 1 to 22 (MIETYSQTAPRSVAPGPPVSMK) lie on the Cytoplasmic side of the membrane. Residues 23-46 (IFMYLLTVFLITQMIGSALFAVYL) traverse the membrane as a helical; Signal-anchor for type II membrane protein segment. Over 47–260 (HRRLDKIEDE…GFTSFGLLKL (214 aa)) the chain is Extracellular. In terms of domain architecture, THD spans 121–260 (VAAHVISEAS…GFTSFGLLKL (140 aa)). Cysteines 177 and 217 form a disulfide. The N-linked (GlcNAc...) asparagine glycan is linked to Asn239.

Belongs to the tumor necrosis factor family. Homotrimer. Interacts with CD28. CD40 ligand, soluble form: Exists as either a monomer or a homotrimer. Forms a ternary complex between CD40 and integrins for CD40-CD40LG signaling. The soluble form derives from the membrane form by proteolytic processing.

It localises to the cell membrane. Its subcellular location is the cell surface. The protein resides in the secreted. Its function is as follows. Cytokine that acts as a ligand to CD40/TNFRSF5. Costimulates T-cell proliferation and cytokine production. Its cross-linking on T-cells generates a costimulatory signal which enhances the production of IL4 and IL10 in conjunction with the TCR/CD3 ligation and CD28 costimulation. Induces the activation of NF-kappa-B. Induces the activation of kinases MAPK8 and PAK2 in T-cells. Mediates B-cell proliferation in the absence of co-stimulus as well as IgE production in the presence of IL4. Involved in immunoglobulin class switching. Acts as a ligand for integrins, specifically ITGA5:ITGB1 and ITGAV:ITGB3; both integrins and the CD40 receptor are required for activation of CD40-CD40LG signaling, which have cell-type dependent effects, such as B-cell activation, NF-kappa-B signaling and anti-apoptotic signaling. The sequence is that of CD40 ligand (CD40LG) from Felis catus (Cat).